The sequence spans 90 residues: Serine protease inhibitor Cvsi-1 (90 aa).

The first 19 residues, 1-19, serve as a signal peptide directing secretion; sequence MDVVRTLILCVCLFGLTFA.

In terms of processing, contains 6 disulfide bonds. As to expression, detected in hemolymph (at protein level). In oysters collected in the summer the expression level is highest in the digestive gland with low levels of expression in gill, mantle, labial palp, style-sac midgut, gonad, heart, and hemocyte. In winter expression levels are higher in all tissues with highest expression levels observed in the digestive gland. Within the digestive gland expression is limited to the basophil cells of the digestive diverticula.

It is found in the secreted. In terms of biological role, slow-binding inhibitor of serine proteases. The inhibitor rapidly binds to the protease forming a weak enzyme-inhibitor complex, and this is followed by a slow isomerization forming a tight-binding enzyme-inhibitor complex. Active against subtilisin A, perkinsin and trypsin with dissociation constants of 0.29 nM, 13.7 nM and 17.7 nM respectively. Not active against thermolysin, papain or pepsin. Has antiparasitic activity against the protozoan P.marinus. This Crassostrea virginica (Eastern oyster) protein is Serine protease inhibitor Cvsi-1.